Reading from the N-terminus, the 202-residue chain is tRNA (pseudouridine(54)-N(1))-methyltransferase (202 aa).

2 residues coordinate S-adenosyl-L-methionine: leucine 134 and glycine 155.

The protein belongs to the methyltransferase superfamily. TrmY family. As to quaternary structure, homodimer.

It is found in the cytoplasm. The catalysed reaction is pseudouridine(54) in tRNA + S-adenosyl-L-methionine = N(1)-methylpseudouridine(54) in tRNA + S-adenosyl-L-homocysteine + H(+). In terms of biological role, specifically catalyzes the N1-methylation of pseudouridine at position 54 (Psi54) in tRNAs. The sequence is that of tRNA (pseudouridine(54)-N(1))-methyltransferase from Thermococcus gammatolerans (strain DSM 15229 / JCM 11827 / EJ3).